Reading from the N-terminus, the 230-residue chain is Potassium/proton antiporter CemA (230 aa).

4 consecutive transmembrane segments (helical) span residues 7-27 (LPSL…SFSF), 106-126 (IILH…FFFL), 145-165 (LNDS…VGFH), and 181-201 (LGWA…PVIL).

This sequence belongs to the CemA family.

The protein localises to the plastid. It is found in the chloroplast inner membrane. It catalyses the reaction K(+)(in) + H(+)(out) = K(+)(out) + H(+)(in). Contributes to K(+)/H(+) antiport activity by supporting proton efflux to control proton extrusion and homeostasis in chloroplasts in a light-dependent manner to modulate photosynthesis. Prevents excessive induction of non-photochemical quenching (NPQ) under continuous-light conditions. Indirectly promotes efficient inorganic carbon uptake into chloroplasts. This chain is Potassium/proton antiporter CemA, found in Lolium perenne (Perennial ryegrass).